The chain runs to 310 residues: Deoxyribonuclease gamma (310 aa).

The N-terminal stretch at 1–25 (MSLHPASPRLASLLLFILALHDTLA) is a signal peptide. The Bipartite nuclear localization signal signature appears at 40–56 (KKENHEAMDIIVKIIKR). Catalysis depends on residues E105 and H160. A disulfide bridge links C199 with C236. A not required for free DNA-nuclease activity but required for activity towards liposome-coated DNA region spans residues 289–310 (SRAFTNNRKSVSLKKRKKGNRS). A Nuclear localization signal motif is present at residues 301-307 (LKKRKKG).

Belongs to the DNase I family. Ca(2+) serves as cofactor. Requires Mg(2+) as cofactor. In terms of processing, poly-ADP-ribosylated by PARP1. ADP-ribosylation negatively regulates enzymatic activity during apoptosis. Expressed at high levels in liver, spleen and testes. Expressed at lower levels in heart, lungs, skeletal muscle and kidney. Not expressed in brain. Predominantly expressed in macrophages; at protein level. Secreted by mononuclear phagocytes.

It is found in the nucleus. The protein resides in the endoplasmic reticulum. Its subcellular location is the secreted. Its activity is regulated as follows. Inhibited by zinc. Inhibited by heparin and proteolysis by plasmin. Functionally, has DNA hydrolytic activity. Is capable of both single- and double-stranded DNA cleavage, producing DNA fragments with 3'-OH ends. Can cleave chromatin to nucleosomal units and cleaves nucleosomal and liposome-coated DNA. Acts in internucleosomal DNA fragmentation (INDF) during apoptosis and necrosis. The role in apoptosis includes myogenic and neuronal differentiation, and BCR-mediated clonal deletion of self-reactive B cells. Is active on chromatin in apoptotic cell-derived membrane-coated microparticles and thus suppresses anti-DNA autoimmunity. Together with DNASE1, plays a key role in degrading neutrophil extracellular traps (NETs). NETs are mainly composed of DNA fibers and are released by neutrophils to bind pathogens during inflammation. Degradation of intravascular NETs by DNASE1 and DNASE1L3 is required to prevent formation of clots that obstruct blood vessels and cause organ damage following inflammation. The protein is Deoxyribonuclease gamma of Mus musculus (Mouse).